The primary structure comprises 358 residues: Ganglioside-induced differentiation-associated protein 1 (358 aa).

The GST N-terminal domain maps to 24–105; the sequence is VKLILYHWTH…YLEQTFLDER (82 aa). Glycyl lysine isopeptide (Lys-Gly) (interchain with G-Cter in ubiquitin) cross-links involve residues lysine 50, lysine 172, lysine 173, lysine 188, and lysine 190. A GST C-terminal domain is found at 153–309; it reads PAYATTRIRS…LISAVLPTAF (157 aa). An N6-acetyllysine; alternate modification is found at lysine 203. A Glycyl lysine isopeptide (Lys-Gly) (interchain with G-Cter in ubiquitin); alternate cross-link involves residue lysine 203. Residues lysine 206, lysine 207, and lysine 214 each participate in a glycyl lysine isopeptide (Lys-Gly) (interchain with G-Cter in ubiquitin) cross-link. A run of 2 helical transmembrane segments spans residues 292–312 and 320–340; these read VLGH…FRVA and LGTT…FMLF. Residues 320–358 are required for mitochondrial localization; the sequence is LGTTLVVGLLAGVGYFAFMLFRKRLGSMILAFRPRPNYF.

It belongs to the GST superfamily. Homodimer. In terms of processing, ubiquitinated by PRKN during mitophagy, leading to its degradation and enhancement of mitophagy. Deubiquitinated by USP30. In terms of tissue distribution, highly expressed in whole brain and spinal cord. Predominant expression in central tissues of the nervous system not only in neurons but also in Schwann cells.

It localises to the mitochondrion outer membrane. Its subcellular location is the cytoplasm. Functionally, regulates the mitochondrial network by promoting mitochondrial fission. This is Ganglioside-induced differentiation-associated protein 1 (GDAP1) from Homo sapiens (Human).